We begin with the raw amino-acid sequence, 370 residues long: MISIYTQPTLAQAWLQKYQGSCPIFALILGYTQTGLIPGISAAGATPQDRQYTAIADAEFLVKGCVKTPQYPLPPLNVGVSPVYISRAVIEAFNIPIYLFNAGLPDPPSVPFIDLEGIPAHCLSSGQALPLDKVYHLYTQGVKWGEKLALIAPKSYLMIGECVVGGTTTALAVLRGLGVDAAGKVNSSHPQCNHAQKWSVVQLGLQKLGTLSDIDPFRLVAAVGDPMQIVAAGMAIAASRTIGVMLAGGTQMLAVYALIKSIISHFQERANLSQLVVGTTRWVAEDKSGDTIGLAQLIPNVPLLATQLNLNQSRYPQLQVYEQGYVKEGVGAGGCAIASYLYQGWTQQQLLNAIESLIAQSVEIKIEHNS.

This sequence belongs to the UPF0284 family.

This Gloeothece citriformis (strain PCC 7424) (Cyanothece sp. (strain PCC 7424)) protein is UPF0284 protein PCC7424_2681.